The chain runs to 338 residues: Glycerol-3-phosphate dehydrogenase [NAD(P)+] (338 aa).

NADPH contacts are provided by tryptophan 11, arginine 30, and lysine 109. Lysine 109, glycine 143, and serine 145 together coordinate sn-glycerol 3-phosphate. Alanine 147 contacts NADPH. Sn-glycerol 3-phosphate is bound by residues lysine 198, aspartate 251, serine 261, arginine 262, and asparagine 263. The active-site Proton acceptor is lysine 198. Arginine 262 is a binding site for NADPH. Residues valine 286 and glutamate 288 each coordinate NADPH.

The protein belongs to the NAD-dependent glycerol-3-phosphate dehydrogenase family.

The protein localises to the cytoplasm. The catalysed reaction is sn-glycerol 3-phosphate + NAD(+) = dihydroxyacetone phosphate + NADH + H(+). It carries out the reaction sn-glycerol 3-phosphate + NADP(+) = dihydroxyacetone phosphate + NADPH + H(+). It functions in the pathway membrane lipid metabolism; glycerophospholipid metabolism. Catalyzes the reduction of the glycolytic intermediate dihydroxyacetone phosphate (DHAP) to sn-glycerol 3-phosphate (G3P), the key precursor for phospholipid synthesis. The sequence is that of Glycerol-3-phosphate dehydrogenase [NAD(P)+] from Cupriavidus taiwanensis (strain DSM 17343 / BCRC 17206 / CCUG 44338 / CIP 107171 / LMG 19424 / R1) (Ralstonia taiwanensis (strain LMG 19424)).